A 211-amino-acid polypeptide reads, in one-letter code: MREKLKVYLVTGRYDFSDTEFLKRIETACRSGVTLVQLREKEVSTRRFYELAVKVKVVTDAYQIPLIINDRVDICLAVDAAGVHIGDDELPVALVRKLVGSTKIVGVSAKTVARGVEAENEGADYLGVGAIFPTTTKDSPLTSLQTLSEIAAAVTIPVVAIGGIKEENIEQLMGTGVAGVSLVSEIMLAEQITEKVQGLMRVTERMLEARK.

Residues 37–41 (QLREK) and N69 contribute to the 4-amino-2-methyl-5-(diphosphooxymethyl)pyrimidine site. The Mg(2+) site is built by D70 and E89. S108 is a binding site for 4-amino-2-methyl-5-(diphosphooxymethyl)pyrimidine. 134–136 (TTT) provides a ligand contact to 2-[(2R,5Z)-2-carboxy-4-methylthiazol-5(2H)-ylidene]ethyl phosphate. K137 is a 4-amino-2-methyl-5-(diphosphooxymethyl)pyrimidine binding site. 2-[(2R,5Z)-2-carboxy-4-methylthiazol-5(2H)-ylidene]ethyl phosphate contacts are provided by residues G163 and 183–184 (VS).

It belongs to the thiamine-phosphate synthase family. Mg(2+) is required as a cofactor.

The enzyme catalyses 2-[(2R,5Z)-2-carboxy-4-methylthiazol-5(2H)-ylidene]ethyl phosphate + 4-amino-2-methyl-5-(diphosphooxymethyl)pyrimidine + 2 H(+) = thiamine phosphate + CO2 + diphosphate. It catalyses the reaction 2-(2-carboxy-4-methylthiazol-5-yl)ethyl phosphate + 4-amino-2-methyl-5-(diphosphooxymethyl)pyrimidine + 2 H(+) = thiamine phosphate + CO2 + diphosphate. The catalysed reaction is 4-methyl-5-(2-phosphooxyethyl)-thiazole + 4-amino-2-methyl-5-(diphosphooxymethyl)pyrimidine + H(+) = thiamine phosphate + diphosphate. Its pathway is cofactor biosynthesis; thiamine diphosphate biosynthesis; thiamine phosphate from 4-amino-2-methyl-5-diphosphomethylpyrimidine and 4-methyl-5-(2-phosphoethyl)-thiazole: step 1/1. In terms of biological role, condenses 4-methyl-5-(beta-hydroxyethyl)thiazole monophosphate (THZ-P) and 2-methyl-4-amino-5-hydroxymethyl pyrimidine pyrophosphate (HMP-PP) to form thiamine monophosphate (TMP). In Enterococcus faecalis (strain ATCC 700802 / V583), this protein is Thiamine-phosphate synthase.